Reading from the N-terminus, the 443-residue chain is D(2) dopamine receptor (443 aa).

The Extracellular portion of the chain corresponds to 1 to 37; the sequence is MDPLNLSWYDDDLERQNWSRPFNGSDGKADRPHYNYY. N-linked (GlcNAc...) asparagine glycosylation is found at N5, N17, and N23. A helical transmembrane segment spans residues 38-60; that stretch reads ATLLTLLIAVIVFGNVLVCMAVS. The Cytoplasmic segment spans residues 61-70; that stretch reads REKALQTTTN. Residues 71–93 traverse the membrane as a helical segment; sequence YLIVSLAVADLLVATLVMPWVVY. Over 94–108 the chain is Extracellular; that stretch reads LEVVGEWKFSRIHCD. A disulfide bridge links C107 with C182. A helical transmembrane segment spans residues 109-130; that stretch reads IFVTLDVMMCTASILNLCAISI. At 131–151 the chain is on the cytoplasmic side; it reads DRYTAVAMPMLYNTRYSSKRR. A helical membrane pass occupies residues 152–172; sequence VTVMISIVWVLSFTISCPLLF. Residues 173–188 are Extracellular-facing; the sequence is GLNNADQNECIIANPA. The helical transmembrane segment at 189-213 threads the bilayer; sequence FVVYSSIVSFYVPFIVTLLVYIKIY. Residues 211–373 are interaction with PPP1R9B; sequence KIYIVLRRRR…SQQKEKKATQ (163 aa). Over 214–373 the chain is Cytoplasmic; it reads IVLRRRRKRV…SQQKEKKATQ (160 aa). The segment at 281-332 is disordered; the sequence is MEMLSSTSPPERTRYSPIPPSHHQLTLPDPSHHGLHSTPDSPAKPEKNGHAK. The span at 323 to 332 shows a compositional bias: basic and acidic residues; it reads AKPEKNGHAK. Residues 374–395 traverse the membrane as a helical segment; sequence MLAIVLGVFIICWLPFFITHIL. The Extracellular segment spans residues 396–409; that stretch reads NIHCDCNIPPVLYS. C399 and C401 form a disulfide bridge. A helical transmembrane segment spans residues 410-431; sequence AFTWLGYVNSAVNPIIYTTFNI. Over 432 to 443 the chain is Cytoplasmic; sequence EFRKAFLKILHC. Residue C443 is the site of S-palmitoyl cysteine attachment.

It belongs to the G-protein coupled receptor 1 family. Forms homo- and heterooligomers with DRD4. The interaction with DRD4 may modulate agonist-induced downstream signaling. Interacts with CADPS and CADPS2. Interacts with GPRASP1, PPP1R9B and CLIC6. Interacts with ARRB2. Interacts with HTR2A. Interacts with GNAI2 isoform sGi2, the interaction allows the creation of an intracellular pool of DRD2 that can be released to cell surface upon agonist stimulation. Interacts with DRD1. Interacts with KCNA2. Palmitoylated. Palmitoylation which is required for proper localization to the plasma membrane and stability of the receptor could be carried on by ZDHHC4, ZDHHC3 and ZDHHC8. Expressed in the anterior pituitary gland.

It localises to the cell membrane. The protein localises to the golgi apparatus membrane. In terms of biological role, dopamine receptor whose activity is mediated by G proteins which inhibit adenylyl cyclase. Positively regulates postnatal regression of retinal hyaloid vessels via suppression of VEGFR2/KDR activity, downstream of OPN5. This is D(2) dopamine receptor (DRD2) from Homo sapiens (Human).